The primary structure comprises 649 residues: Protein PSK SIMULATOR 3 (649 aa).

A lipid anchor (N-myristoyl glycine) is attached at glycine 2. The interval 18 to 43 is disordered; sequence SGSSVADDGREPDFGHSQPNGQTSLI.

The protein resides in the nucleus. Promotes plant growth, especially at the vegetative stage, probably via the regulation of phytosulfokine (PSK) signaling; PSK are peptide phytohormones acting as growth factors. Together with PSI2 and PSI3, required during vegetative growth and reproduction. May also have a function in carbohydrate metabolism. This is Protein PSK SIMULATOR 3 from Arabidopsis thaliana (Mouse-ear cress).